The following is a 431-amino-acid chain: Histidinol dehydrogenase (431 aa).

Residues Tyr-127, Gln-185, and Asn-208 each coordinate NAD(+). The substrate site is built by Ser-234, Gln-256, and His-259. Residues Gln-256 and His-259 each contribute to the Zn(2+) site. Active-site proton acceptor residues include Glu-323 and His-324. Substrate is bound by residues His-324, Asp-357, Glu-411, and His-416. Residue Asp-357 coordinates Zn(2+). His-416 contacts Zn(2+).

It belongs to the histidinol dehydrogenase family. Zn(2+) serves as cofactor.

It carries out the reaction L-histidinol + 2 NAD(+) + H2O = L-histidine + 2 NADH + 3 H(+). It participates in amino-acid biosynthesis; L-histidine biosynthesis; L-histidine from 5-phospho-alpha-D-ribose 1-diphosphate: step 9/9. Catalyzes the sequential NAD-dependent oxidations of L-histidinol to L-histidinaldehyde and then to L-histidine. This Vibrio parahaemolyticus serotype O3:K6 (strain RIMD 2210633) protein is Histidinol dehydrogenase.